The sequence spans 449 residues: Glucose-6-phosphate isomerase (449 aa).

Residue Glu-290 is the Proton donor of the active site. Residues His-311 and Lys-425 contribute to the active site.

This sequence belongs to the GPI family.

It localises to the cytoplasm. The catalysed reaction is alpha-D-glucose 6-phosphate = beta-D-fructose 6-phosphate. The protein operates within carbohydrate biosynthesis; gluconeogenesis. It functions in the pathway carbohydrate degradation; glycolysis; D-glyceraldehyde 3-phosphate and glycerone phosphate from D-glucose: step 2/4. Functionally, catalyzes the reversible isomerization of glucose-6-phosphate to fructose-6-phosphate. The sequence is that of Glucose-6-phosphate isomerase from Exiguobacterium sibiricum (strain DSM 17290 / CCUG 55495 / CIP 109462 / JCM 13490 / 255-15).